The sequence spans 384 residues: Spermidine/putrescine import ATP-binding protein PotA (384 aa).

The ABC transporter domain occupies 6-238 (IAFKNVSKVF…PINHFVATFI (233 aa)). 40 to 47 (GASGSGKS) serves as a coordination point for ATP.

Belongs to the ABC transporter superfamily. Spermidine/putrescine importer (TC 3.A.1.11.1) family. In terms of assembly, the complex is composed of two ATP-binding proteins (PotA), two transmembrane proteins (PotB and PotC) and a solute-binding protein (PotD).

The protein localises to the cell membrane. The catalysed reaction is ATP + H2O + polyamine-[polyamine-binding protein]Side 1 = ADP + phosphate + polyamineSide 2 + [polyamine-binding protein]Side 1.. Part of the ABC transporter complex PotABCD involved in spermidine/putrescine import. Responsible for energy coupling to the transport system. This Streptococcus agalactiae serotype Ia (strain ATCC 27591 / A909 / CDC SS700) protein is Spermidine/putrescine import ATP-binding protein PotA.